The primary structure comprises 307 residues: Small ribosomal subunit biogenesis GTPase RsgA (307 aa).

Residues 1–21 are disordered; that stretch reads MPSEHPFSDGISTPNPKETMN. The segment covering 10–21 has biased composition (polar residues); that stretch reads GISTPNPKETMN. Residues 85 to 242 enclose the CP-type G domain; that stretch reads RQDAWKTKLI…LIDSPGLQEF (158 aa). GTP-binding positions include 135–138 and 184–192; these read NKAD and GQSGMGKST. Zn(2+)-binding residues include C266, C271, H273, and C279.

This sequence belongs to the TRAFAC class YlqF/YawG GTPase family. RsgA subfamily. In terms of assembly, monomer. Associates with 30S ribosomal subunit, binds 16S rRNA. Zn(2+) serves as cofactor.

It localises to the cytoplasm. Functionally, one of several proteins that assist in the late maturation steps of the functional core of the 30S ribosomal subunit. Helps release RbfA from mature subunits. May play a role in the assembly of ribosomal proteins into the subunit. Circularly permuted GTPase that catalyzes slow GTP hydrolysis, GTPase activity is stimulated by the 30S ribosomal subunit. This chain is Small ribosomal subunit biogenesis GTPase RsgA, found in Neisseria gonorrhoeae (strain NCCP11945).